A 33-amino-acid polypeptide reads, in one-letter code: Cytochrome b6-f complex subunit 8 (33 aa).

Residues 2-22 (LISLGWAALAATFTFSIAMVV) traverse the membrane as a helical segment.

This sequence belongs to the PetN family. As to quaternary structure, the 4 large subunits of the cytochrome b6-f complex are cytochrome b6, subunit IV (17 kDa polypeptide, PetD), cytochrome f and the Rieske protein, while the 4 small subunits are PetG, PetL, PetM and PetN. The complex functions as a dimer.

Its subcellular location is the cellular thylakoid membrane. In terms of biological role, component of the cytochrome b6-f complex, which mediates electron transfer between photosystem II (PSII) and photosystem I (PSI), cyclic electron flow around PSI, and state transitions. The polypeptide is Cytochrome b6-f complex subunit 8 (Synechococcus sp. (strain RCC307)).